The following is a 705-amino-acid chain: Prolyl endopeptidase (705 aa).

A signal peptide spans 1 to 20 (MKYNKLSVAVAAFAFAAVSA). Residues Ser556 and His675 each act as charge relay system in the active site.

The protein belongs to the peptidase S9A family. In terms of assembly, monomer.

The protein localises to the periplasm. It catalyses the reaction Hydrolysis of Pro-|-Xaa &gt;&gt; Ala-|-Xaa in oligopeptides.. Cleaves peptide bonds on the C-terminal side of prolyl residues within peptides that are up to approximately 30 amino acids long. Has an absolute requirement for an X-Pro bond in the trans configuration immediately preceding the Pro-Y scissible bond. The polypeptide is Prolyl endopeptidase (f1pep1) (Elizabethkingia meningoseptica (Chryseobacterium meningosepticum)).